A 146-amino-acid chain; its full sequence is Core protein OPG114 (146 aa).

It belongs to the orthopoxvirus OPG114 family. Part of a complex composed of the kinase OPG054, OPG092, OPG100, OPG114, OPG115, OPG142 and OPG157.

It is found in the virion. Late protein which is part of a large complex required for early virion morphogenesis. This complex participates in the formation of virosomes and the incorporation of virosomal contents into nascent immature virions. The protein is Core protein OPG114 (OPG114) of Vaccinia virus (strain Western Reserve) (VACV).